A 190-amino-acid polypeptide reads, in one-letter code: CASP-like protein 1E1 (190 aa).

Residues 1 to 23 (MEHESKNKVDGMEMEKGKKESGS) are disordered. Residues 1 to 28 (MEHESKNKVDGMEMEKGKKESGSRKGLE) are Cytoplasmic-facing. A helical transmembrane segment spans residues 29-49 (LTMRVLALVLTMVAATVLGVA). Topologically, residues 50–83 (KQTKVVPIKLIPTLPPLNVSTTAKASYLSAFVYN) are extracellular. Asn-67 carries an N-linked (GlcNAc...) asparagine glycan. A helical transmembrane segment spans residues 84–104 (ISANAIACGYTAISIVIVMIS). The Cytoplasmic portion of the chain corresponds to 105–111 (KGKRSKS). A helical transmembrane segment spans residues 112 to 132 (LLMAVLIGDLMMVALLFSSTG). Residues 133-163 (AAGAIGLMGRHGNKHVMWKKVCGVFGKFCNQ) lie on the Extracellular side of the membrane. A helical transmembrane segment spans residues 164 to 184 (AAVSVAITLIASVVFMLLVVL). At 185-190 (DALKLP) the chain is on the cytoplasmic side.

It belongs to the Casparian strip membrane proteins (CASP) family. In terms of assembly, homodimer and heterodimers.

It localises to the cell membrane. This chain is CASP-like protein 1E1, found in Arabidopsis thaliana (Mouse-ear cress).